The following is a 520-amino-acid chain: Cytochrome P450 72A68 (520 aa).

The chain crosses the membrane as a helical span at residues 11–31; the sequence is IILITVTFGLVYAWRVLNWMW. Position 466 (Cys-466) interacts with heme.

It belongs to the cytochrome P450 family. Heme is required as a cofactor.

The protein resides in the membrane. It carries out the reaction oleanolate + 3 reduced [NADPH--hemoprotein reductase] + 3 O2 = gypsogenate + 3 oxidized [NADPH--hemoprotein reductase] + 4 H2O + 4 H(+). Functionally, catalyzes the carboxylation of oleanolic acid at the C-23 position to form gypsogenic acid. Involved in the hemolytic saponin biosynthetic pathway. This chain is Cytochrome P450 72A68, found in Medicago truncatula (Barrel medic).